Here is a 532-residue protein sequence, read N- to C-terminus: MEGESYHNETTVNGTPVNHQALERHGLWEVITIAAVTAVVSLMTIVGNVLVMISFKVNSQLKTVNNYYLLSLACADLIIGIFSMNLYTTYILMGRWVLGSLACDLWLALDYVASNASVMNLLVISFDRYFSITRPLTYRAKRTPKRAGIMIGLAWLVSFILWAPAILCWQYLVGKRTVPPDECQIQFLSEPTITFGTAIAAFYIPVSVMTILYCRIYRETEKRTKDLADLQGSDSVAEVKKRKPAHRTLLRSFFSCPRPSLAQRVRNQASWSSSRRSTSTTGKPTQATDLSADWEKAEQVTNCSSCPSSEDEAKATTDPVFQVVCKNEAKESPGKEFNTQETKETFVSPRTENNDYDTPKYFLSPGAAHRLKSQKCVAYKFRLVVKADGTQETNNGCRKVKIMPCSFPVSKDPSTKGLDPHLSHQMTKRKRMVLVKERKAAQTLSAILLAFIITWTPYNIMVLVSTFCDKCVPVTLWHLGYWLCYVNSTINPICYALCNRTFRKTFKLLLLCRWKKKKVEEKLYWQGNSKLP.

At 1–29 the chain is on the extracellular side; it reads MEGESYHNETTVNGTPVNHQALERHGLWE. The N-linked (GlcNAc...) asparagine glycan is linked to asparagine 8. The helical transmembrane segment at 30–53 threads the bilayer; it reads VITIAAVTAVVSLMTIVGNVLVMI. At 54–66 the chain is on the cytoplasmic side; it reads SFKVNSQLKTVNN. Residues 67–87 traverse the membrane as a helical segment; that stretch reads YYLLSLACADLIIGIFSMNLY. Topologically, residues 88-104 are extracellular; the sequence is TTYILMGRWVLGSLACD. A disulfide bond links cysteine 103 and cysteine 183. A helical membrane pass occupies residues 105–126; it reads LWLALDYVASNASVMNLLVISF. Residues 127–146 are Cytoplasmic-facing; that stretch reads DRYFSITRPLTYRAKRTPKR. Residues 147-169 traverse the membrane as a helical segment; that stretch reads AGIMIGLAWLVSFILWAPAILCW. The Extracellular portion of the chain corresponds to 170–191; sequence QYLVGKRTVPPDECQIQFLSEP. A helical transmembrane segment spans residues 192–214; sequence TITFGTAIAAFYIPVSVMTILYC. Residues 215-443 lie on the Cytoplasmic side of the membrane; it reads RIYRETEKRT…LVKERKAAQT (229 aa). Residues 265-290 are disordered; the sequence is VRNQASWSSSRRSTSTTGKPTQATDL. Over residues 270–281 the composition is skewed to low complexity; it reads SWSSSRRSTSTT. The helical transmembrane segment at 444–464 threads the bilayer; it reads LSAILLAFIITWTPYNIMVLV. The Extracellular portion of the chain corresponds to 465–478; it reads STFCDKCVPVTLWH. Residues 479–498 traverse the membrane as a helical segment; that stretch reads LGYWLCYVNSTINPICYALC. At 499 to 532 the chain is on the cytoplasmic side; it reads NRTFRKTFKLLLLCRWKKKKVEEKLYWQGNSKLP. A phosphothreonine mark is found at threonine 501 and threonine 505.

This sequence belongs to the G-protein coupled receptor 1 family. Muscarinic acetylcholine receptor subfamily. CHRM5 sub-subfamily.

Its subcellular location is the cell membrane. It localises to the postsynaptic cell membrane. Its function is as follows. The muscarinic acetylcholine receptor mediates various cellular responses, including inhibition of adenylate cyclase, breakdown of phosphoinositides and modulation of potassium channels through the action of G proteins. Primary transducing effect is Pi turnover. This chain is Muscarinic acetylcholine receptor M5 (Chrm5), found in Mus musculus (Mouse).